The sequence spans 865 residues: Probable beta-glucosidase J (865 aa).

Asp-233 is a catalytic residue. Residues Asn-330, Asn-447, Asn-503, and Asn-764 are each glycosylated (N-linked (GlcNAc...) asparagine). The PA14 domain maps to 411 to 579 (TGQPGYTFRV…DTDTAIQQAV (169 aa)).

Belongs to the glycosyl hydrolase 3 family.

It localises to the secreted. The catalysed reaction is Hydrolysis of terminal, non-reducing beta-D-glucosyl residues with release of beta-D-glucose.. The protein operates within glycan metabolism; cellulose degradation. Functionally, beta-glucosidases are one of a number of cellulolytic enzymes involved in the degradation of cellulosic biomass. Catalyzes the last step releasing glucose from the inhibitory cellobiose. This Aspergillus fumigatus (strain ATCC MYA-4609 / CBS 101355 / FGSC A1100 / Af293) (Neosartorya fumigata) protein is Probable beta-glucosidase J (bglJ).